The primary structure comprises 311 residues: tRNA pseudouridine synthase B (311 aa).

Residue Asp-49 is the Nucleophile of the active site.

The protein belongs to the pseudouridine synthase TruB family. Type 1 subfamily.

The enzyme catalyses uridine(55) in tRNA = pseudouridine(55) in tRNA. Functionally, responsible for synthesis of pseudouridine from uracil-55 in the psi GC loop of transfer RNAs. The protein is tRNA pseudouridine synthase B of Rhizobium meliloti (strain 1021) (Ensifer meliloti).